The chain runs to 494 residues: O-acetyltransferase ptmV (494 aa).

The interval 181–203 (ESQQDSREKLRHSGGPPDPRFDH) is disordered.

It belongs to the fumigaclavine B O-acetyltransferase family. In terms of assembly, monomer.

The protein operates within secondary metabolite biosynthesis. In terms of biological role, O-acetyltransferase; part of the gene cluster that mediates the biosynthesis of the indole diterpenes penitrems. The geranylgeranyl diphosphate (GGPP) synthase ptmG catalyzes the first step in penitrem biosynthesis via conversion of farnesyl pyrophosphate and isopentyl pyrophosphate into geranylgeranyl pyrophosphate (GGPP). Condensation of indole-3-glycerol phosphate with GGPP by the prenyl transferase ptmC then forms 3-geranylgeranylindole (3-GGI). Epoxidation by the FAD-dependent monooxygenase ptmM leads to a epoxidized-GGI that is substrate of the terpene cyclase ptmB for cyclization to yield paspaline. Paspaline is subsequently converted to 13-desoxypaxilline by the cytochrome P450 monooxygenase ptmP, the latter being then converted to paxilline by the cytochrome P450 monooxygenase ptmQ. Paxilline is converted to beta-paxitriol via C-10 ketoreduction by the short-chain dehydrogenase ptmH which can be monoprenylated at the C-20 by the indole diterpene prenyltransferase ptmD. A two-step elimination (acetylation and elimination) process performed by the O-acetyltransferase ptmV and ptmI leads to the production of the prenylated form of penijanthine. The FAD-linked oxidoreductase ptmO then converts the prenylated form of penijanthine into PC-M5 which is in turn transformed into PC-M4 by the aromatic dimethylallyltransferase ptmE. Five sequential oxidative transformations performed by the cytochrome P450 monooxygenases ptmK, ptmU, ptmL, ptmN and ptmJ yield the various penitrem compounds. PtmK, ptmU and ptmM are involved in the formation of the key bicyclic ring of penitrem C via the formation of the intermediates secopenitrem D and penitrem D. PtmL catalyzes the epoxidation of penitrem D and C to yield penitrem B and F, respectively. PtmJ catalyzes the last benzylic hydroxylation to convert penitrem B to prenitrem E and penitrem F to penitrem A. This is O-acetyltransferase ptmV from Penicillium ochrochloron.